Consider the following 169-residue polypeptide: Centrin-1 (169 aa).

The interval 1–21 (MHSRKGASSLPRGRGAGKKTE) is essential for homooligomerization. The segment at 1-25 (MHSRKGASSLPRGRGAGKKTELTEE) is disordered. 4 consecutive EF-hand domains span residues 25–60 (EQRQ…LGFE), 61–96 (PKKE…KMAE), 98–133 (DPRE…LGEN), and 134–169 (LTDE…TNLF). The Ca(2+) site is built by D38, D40, S42, C44, E49, D74, D76, T78, S80, and E85.

The protein belongs to the centrin family. In terms of assembly, monomer. Homooligomerizes in a Ca(2+)-dependent manner. Interaction via the C-terminus with other proteins disrupts and/or prevents homooligomerization. Interacts with SFI1.

It is found in the cytoplasm. It localises to the cytoskeleton. The protein resides in the microtubule organizing center. The protein localises to the centrosome. Functionally, acts as a calcium sensor. Part of the centrosome outer core complex. The polypeptide is Centrin-1 (Toxoplasma gondii (strain ATCC 50611 / Me49)).